A 312-amino-acid polypeptide reads, in one-letter code: MSIDIETTLQKAYPDFDVLLKSRPATHYKVYKIPKRTIGYRIIAQPTPRVKAIQRDIIEILKQHTHIHDAATAYVDGKNILDNAKIHQSSVYLLKLDLVNFFNKITPELLFKALARQKVDISDTNKNLLKQFCFWNRTKRKNGALVLSVGAPSSPFISNIVMSSFDEEISSFCKENKISYSRYADDLTFSTNERDVLGLAHQKVKTTLIRFFGTRIIINNNKIVYSSKAHNRHVTGVTLTNNNKLSLGRERKRYITSLVFKFKEGKLSNVDINHLRGLIGFAYNIEPAFIERLEKKYGESTIKSIKKYSEGG.

The region spanning 14–239 (PDFDVLLKSR…HNRHVTGVTL (226 aa)) is the Reverse transcriptase domain. Mg(2+)-binding residues include Asp97, Asp185, and Asp186.

Belongs to the bacterial reverse transcriptase family.

The enzyme catalyses DNA(n) + a 2'-deoxyribonucleoside 5'-triphosphate = DNA(n+1) + diphosphate. Reverse transcriptase (RT) component of antiviral defense system retron Ec83, composed of a non-coding RNA (ncRNA), this reverse transcriptase (RT), a probable ATPase and a putative HNH endonuclease. Expression of retron Ec83 confers protection against bacteriophages T2, T4 and T6. At multiplicity of infection (MOI) of 0.02 cultures slow growth when infected with T4 but do not collapse, at MOI 2 cultures enter growth stasis. Responsible for synthesis of msDNA-Ec83 (a linear ssDNA with a 5'-terminal phosphate residue). Unlike most known msDNAs the mature product from the original strain does not have an RNA component. When the ncRNA plus RT are expressed in strain K12 / JM109 only linear DNA is seen in stationary phase cells, but logarithmic phase cells have both a linear and branched msDNA (a branched molecule with RNA linked by a 2',5'-phosphodiester bond to ssDNA, a 'classic' retron). The branched msDNA is probably the precursor for the mature linear msDNA, the precursor is cleaved endonucleolytically by ExoVII (xseA-xseB) leaving the observed mature 5'-phosphate ssDNA terminus. The retron transcript serves as primer (from a conserved internal G residue) and template for the reaction, and codes for the RT. Overexpression of the ncRNA and RT, which leads to increased levels of msDNA, is mutagenic in vivo. This may be due to a mismatch in the msDNA stem which binds and sequesters MutS and/or MutL. This Escherichia coli protein is Retron Ec83 reverse transcriptase.